A 1065-amino-acid chain; its full sequence is Carbamoyl phosphate synthase large chain (1065 aa).

Residues 1–401 are carboxyphosphate synthetic domain; the sequence is MPKRTDIETI…AMLKAVRSLE (401 aa). ATP is bound by residues Arg-129, Arg-169, Gly-175, Gly-176, Lys-208, Ile-210, Glu-215, Gly-241, Ile-242, His-243, Gln-284, and Glu-298. Residues 133-327 form the ATP-grasp 1 domain; the sequence is RNLMYELGAP…IAKLAAKIAV (195 aa). Gln-284, Glu-298, and Asn-300 together coordinate Mg(2+). Mn(2+)-binding residues include Gln-284, Glu-298, and Asn-300. The tract at residues 402–546 is oligomerization domain; that stretch reads TGQVHLELKH…YGTYEEENES (145 aa). The carbamoyl phosphate synthetic domain stretch occupies residues 547-929; that stretch reads IKSEKPSVVV…ALYKGLVAAG (383 aa). The ATP-grasp 2 domain occupies 671–861; the sequence is EQALRDLNIP…MANIATKAIL (191 aa). ATP-binding residues include Arg-707, Arg-746, Leu-748, Glu-752, Gly-777, Val-778, His-779, Ser-780, Gln-820, and Glu-832. Gln-820, Glu-832, and Asn-834 together coordinate Mg(2+). The Mn(2+) site is built by Gln-820, Glu-832, and Asn-834. Residues 930–1065 enclose the MGS-like domain; that stretch reads MEIRTEGTVL…EEMPKAEVVH (136 aa). Residues 930-1065 form an allosteric domain region; it reads MEIRTEGTVL…EEMPKAEVVH (136 aa).

It belongs to the CarB family. As to quaternary structure, composed of two chains; the small (or glutamine) chain promotes the hydrolysis of glutamine to ammonia, which is used by the large (or ammonia) chain to synthesize carbamoyl phosphate. Tetramer of heterodimers (alpha,beta)4. Mg(2+) is required as a cofactor. Mn(2+) serves as cofactor.

The enzyme catalyses hydrogencarbonate + L-glutamine + 2 ATP + H2O = carbamoyl phosphate + L-glutamate + 2 ADP + phosphate + 2 H(+). It catalyses the reaction hydrogencarbonate + NH4(+) + 2 ATP = carbamoyl phosphate + 2 ADP + phosphate + 2 H(+). The protein operates within amino-acid biosynthesis; L-arginine biosynthesis; carbamoyl phosphate from bicarbonate: step 1/1. It participates in pyrimidine metabolism; UMP biosynthesis via de novo pathway; (S)-dihydroorotate from bicarbonate: step 1/3. Large subunit of the glutamine-dependent carbamoyl phosphate synthetase (CPSase). CPSase catalyzes the formation of carbamoyl phosphate from the ammonia moiety of glutamine, carbonate, and phosphate donated by ATP, constituting the first step of 2 biosynthetic pathways, one leading to arginine and/or urea and the other to pyrimidine nucleotides. The large subunit (synthetase) binds the substrates ammonia (free or transferred from glutamine from the small subunit), hydrogencarbonate and ATP and carries out an ATP-coupled ligase reaction, activating hydrogencarbonate by forming carboxy phosphate which reacts with ammonia to form carbamoyl phosphate. The protein is Carbamoyl phosphate synthase large chain of Lysinibacillus sphaericus (strain C3-41).